The chain runs to 447 residues: N-succinylarginine dihydrolase (447 aa).

Substrate-binding positions include 19 to 28, Asn110, and 137 to 138; these read AGLSVGNKAS and HR. The active site involves Glu174. A substrate-binding site is contributed by Arg213. The active site involves His249. The substrate site is built by Asp251 and Asn365. Cys371 functions as the Nucleophile in the catalytic mechanism.

Belongs to the succinylarginine dihydrolase family. Homodimer.

The enzyme catalyses N(2)-succinyl-L-arginine + 2 H2O + 2 H(+) = N(2)-succinyl-L-ornithine + 2 NH4(+) + CO2. The protein operates within amino-acid degradation; L-arginine degradation via AST pathway; L-glutamate and succinate from L-arginine: step 2/5. In terms of biological role, catalyzes the hydrolysis of N(2)-succinylarginine into N(2)-succinylornithine, ammonia and CO(2). The protein is N-succinylarginine dihydrolase of Photorhabdus laumondii subsp. laumondii (strain DSM 15139 / CIP 105565 / TT01) (Photorhabdus luminescens subsp. laumondii).